Consider the following 856-residue polypeptide: Phosphoenolpyruvate synthase (856 aa).

H433 acts as the Tele-phosphohistidine intermediate in catalysis. Residues R523, R636, E738, G759, S760, N761, and D762 each contribute to the substrate site. Residue E738 participates in Mg(2+) binding. Mg(2+) is bound at residue D762. C809 acts as the Proton donor in catalysis.

It belongs to the PEP-utilizing enzyme family. The cofactor is Mg(2+).

It carries out the reaction pyruvate + ATP + H2O = phosphoenolpyruvate + AMP + phosphate + 2 H(+). It functions in the pathway carbohydrate biosynthesis; gluconeogenesis. In terms of biological role, catalyzes the phosphorylation of pyruvate to phosphoenolpyruvate. The sequence is that of Phosphoenolpyruvate synthase (ppsA) from Aquifex aeolicus (strain VF5).